We begin with the raw amino-acid sequence, 545 residues long: Tripartite motif-containing protein 26 (545 aa).

The RING-type zinc-finger motif lies at 16–57 (CSICLDYLRDPVTIDCGHVFCRSCTSDIRPISGNRPVCPLCK). Residues 97-138 (QDMKLCERHQEKLHYYCEDDGKLLCVMCRESREHRPHTAVLV) form a B box-type zinc finger. 4 residues coordinate Zn(2+): cysteine 102, histidine 105, cysteine 124, and histidine 130. A coiled-coil region spans residues 197–243 (QFLKKREQHLLDQLATLEQLLTEGREKFKTRGVSELDRLTLVISELE). A B30.2/SPRY domain is found at 301–545 (RGLRQFQGKL…WPGARLLLRP (245 aa)). The disordered stretch occupies residues 382–443 (REGWSEDEEE…EEEEEVQESC (62 aa)). Acidic residues predominate over residues 386–440 (SEDEEEGEEEEEGEEEEEDEEVGYGDGYEDWETDEEDESLGEEEEEEEEEEEEVQ).

Belongs to the TRIM/RBCC family. Interacts with TBK1; this interaction bridges together TBK1 and NEMO in order to activate TBK1. Interacts with INCA1. Autoubiquitinates upon viral infection. In turn, autoubiquitinated TRIM26 recruits NEMO and bridges TBK1-NEMO interaction.

It localises to the cytoplasm. The protein resides in the nucleus. It catalyses the reaction S-ubiquitinyl-[E2 ubiquitin-conjugating enzyme]-L-cysteine + [acceptor protein]-L-lysine = [E2 ubiquitin-conjugating enzyme]-L-cysteine + N(6)-ubiquitinyl-[acceptor protein]-L-lysine.. In terms of biological role, E3 ubiquitin-protein ligase which regulates the IFN-beta production and antiviral response downstream of various DNA-encoded pattern-recognition receptors (PRRs). Also plays a central role in determining the response to different forms of oxidative stress by controlling levels of DNA glycosylases NEIL1, NEIL3 and NTH1 that are involved in repair of damaged DNA. Promotes nuclear IRF3 ubiquitination and proteasomal degradation. Bridges together TBK1 and NEMO during the innate response to viral infection leading to the activation of TBK1. Positively regulates LPS-mediated inflammatory innate immune response by catalyzing the 'Lys-11'-linked polyubiquitination of TAB1 to enhance its activation and subsequent NF-kappa-B and MAPK signaling. In a manner independent of its catalytic activity, inhibits WWP2, a SOX2-directed E3 ubiquitin ligase, and thus protects SOX2 from polyubiquitination and proteasomal degradation. Ubiquitinates the histone acetyltransferase protein complex component PHF20 and thereby triggers its degradation in the nucleus after its recruitment by the histone demethylase KDM6B, serving as a scaffold protein. Upon induction by TGF-beta, ubiquitinates the TFIID component TAF7 for proteasomal degradation. Induces ferroptosis by ubiquitinating SLC7A11, a critical protein for lipid reactive oxygen species (ROS) scavenging. The chain is Tripartite motif-containing protein 26 (Trim26) from Mus musculus (Mouse).